Here is a 407-residue protein sequence, read N- to C-terminus: POC1 centriolar protein homolog A (407 aa).

WD repeat units lie at residues 17–56, 59–98, 101–140, 143–182, 185–224, 227–266, and 269–308; these read GHRDAVTSVDFSLNTKQLASGSMDSCLMVWHMKPQTRAYR, GHKDAVTCVNFSPSGHLLASGSRDKTVRIWVPNVKGESTV, AHTATVRSVHFCSDGQSFVTASDDKTVKVWSTHRQKFLFS, QHINWVRCAKFSPDGRLIVSASDDKTVKLWDKTSRECVHS, EHGGFVTYVDFHPSGTCIAAAGMDNTVKVWDVRTHRLLQH, LHSAAVNALSFHPSGNYLVTASSDSTLKILDLMEGRLLYT, and GHQGPATTVAFSRTGEYFASGGSDEQVMVWKSNFDIVDYG. The tract at residues 317 to 357 is disordered; it reads PATRASSSGTLPEVDPLVPPGRGRSQESMQSHSQEPVSVPQ. The span at 342-357 shows a compositional bias: polar residues; sequence QESMQSHSQEPVSVPQ. Residues 369 to 397 are a coiled coil; the sequence is QLDVLTQTVSILEQRLTLTEDKLKQCLEN.

This sequence belongs to the WD repeat POC1 family. As to quaternary structure, interacts with POC1B.

It localises to the cytoplasm. Its subcellular location is the cytoskeleton. It is found in the microtubule organizing center. The protein localises to the centrosome. The protein resides in the centriole. It localises to the cilium basal body. Its subcellular location is the spindle pole. In terms of biological role, plays an important role in centriole assembly and/or stability and ciliogenesis. Involved in early steps of centriole duplication, as well as in the later steps of centriole length control. Acts in concert with POC1B to ensure centriole integrity and proper mitotic spindle formation. The chain is POC1 centriolar protein homolog A (POC1A) from Bos taurus (Bovine).